The chain runs to 275 residues: Small ribosomal subunit protein uS2 (275 aa).

The segment at 244–275 (REGAEASKKKATVKKKAAPRAASGESAEAAAE) is disordered. Residues 252–261 (KKATVKKKAA) show a composition bias toward basic residues. The segment covering 262–275 (PRAASGESAEAAAE) has biased composition (low complexity).

It belongs to the universal ribosomal protein uS2 family.

This is Small ribosomal subunit protein uS2 from Thioalkalivibrio sulfidiphilus (strain HL-EbGR7).